Reading from the N-terminus, the 368-residue chain is RNA polymerase sigma factor SigA (368 aa).

Over residues 71 to 83 the composition is skewed to basic and acidic residues; sequence NEKDSSDTDDKIN. The segment at 71 to 90 is disordered; sequence NEKDSSDTDDKINPNDLSAP. The segment at 135–205 is sigma-70 factor domain-2; sequence LAEANLRLVV…TRAIADQART (71 aa). The short motif at 159–162 is the Interaction with polymerase core subunit RpoC element; the sequence is DLIQ. The interval 214–290 is sigma-70 factor domain-3; the sequence is ETINKLIRVQ…DQEAQSPSDH (77 aa). The tract at residues 303-356 is sigma-70 factor domain-4; sequence VLDTLTDREENVLRLRFGLDDGRTRTLEEVGKVFGVTRERIRQIEAKALRKLRH. Residues 329-348 constitute a DNA-binding region (H-T-H motif); that stretch reads LEEVGKVFGVTRERIRQIEA.

The protein belongs to the sigma-70 factor family. RpoD/SigA subfamily. Interacts transiently with the RNA polymerase catalytic core.

The protein resides in the cytoplasm. Its function is as follows. Sigma factors are initiation factors that promote the attachment of RNA polymerase to specific initiation sites and are then released. This sigma factor is the primary sigma factor during exponential growth. This Staphylococcus epidermidis (strain ATCC 35984 / DSM 28319 / BCRC 17069 / CCUG 31568 / BM 3577 / RP62A) protein is RNA polymerase sigma factor SigA.